A 345-amino-acid chain; its full sequence is MSNRLSYWEYLHQELKLNADIQSQLVVLDLFAGCGGFSLGFKAAGFQTIGYEMLADAAATYTRNLQDPCYCQTLEIGQDLCNHPDVIIGGPPCQPFSVGGLQKGPRDSRDGLPIFIDAIARYQPEIAIFENVRGMLYKNRQYLEKIVAELERLNYRVDIKLINAVNYGVPQKRERLFVVAYQTAWNWPEAETLAIPYTAGDAIYDTASTIPIGAKFLTPSMLEYIGRYEAKSKCVKPRDIYLDIPCRTLTCRNLSGATSDMLRLLLPDGRRRRLTVREAARLQSFPDWFELVGSENSQFNQIGNAVPPLLAKAIAKSVKMTLENKPSRPTDYFSPFPQQLKLPFA.

Residues 25–325 (LVVLDLFAGC…KSVKMTLENK (301 aa)) enclose the SAM-dependent MTase C5-type domain. Cys93 is an active-site residue.

This sequence belongs to the class I-like SAM-binding methyltransferase superfamily. C5-methyltransferase family.

The catalysed reaction is a 2'-deoxycytidine in DNA + S-adenosyl-L-methionine = a 5-methyl-2'-deoxycytidine in DNA + S-adenosyl-L-homocysteine + H(+). In terms of biological role, a methylase, recognizes the double-stranded sequence 5'-CTGCAG-3', methylates C-4 on both strands, and protects the DNA from cleavage by the AplI endonuclease. The polypeptide is Type II methyltransferase M.AplI (aplIM) (Arthrospira platensis (strain NIES-39 / UTEX 3086 / IAM M-135) (Spirulina platensis)).